A 67-amino-acid polypeptide reads, in one-letter code: Large ribosomal subunit protein bL35 (67 aa).

The protein belongs to the bacterial ribosomal protein bL35 family.

This is Large ribosomal subunit protein bL35 from Methylorubrum extorquens (strain CM4 / NCIMB 13688) (Methylobacterium extorquens).